We begin with the raw amino-acid sequence, 552 residues long: Ribosomal lysine N-methyltransferase 3 (552 aa).

Positions Ser26–Gly335 constitute an SET domain. Position 334 (Tyr334) interacts with S-adenosyl-L-methionine. The interval Glu399–Leu432 is disordered. The span at Leu413–Leu432 shows a compositional bias: acidic residues.

It belongs to the class V-like SAM-binding methyltransferase superfamily.

The protein resides in the nucleus. Functionally, S-adenosyl-L-methionine-dependent protein-lysine N-methyltransferase that monomethylates 60S ribosomal protein L42 (RPL42A and RPL42B) at 'Lys-40'. This chain is Ribosomal lysine N-methyltransferase 3, found in Saccharomyces cerevisiae (strain ATCC 204508 / S288c) (Baker's yeast).